A 358-amino-acid polypeptide reads, in one-letter code: C-X-C chemokine receptor type 4-B (358 aa).

Residues 1–25 (MDGFSGGIDINIFDGNSTENGSGDF) are important for chemokine binding and signaling. Over 1 to 44 (MDGFSGGIDINIFDGNSTENGSGDFEDFIEPCFMQENSDFNRIF) the chain is Extracellular. Asn-16 and Asn-20 each carry an N-linked (GlcNAc...) asparagine glycan. Cystine bridges form between Cys-32–Cys-281 and Cys-113–Cys-190. The chain crosses the membrane as a helical span at residues 45–67 (LPTIYSFIFLLGIIGNGLVVVVM). Residues 68-81 (GYQKKSRTMTDKYR) are Cytoplasmic-facing. The chain crosses the membrane as a helical span at residues 82–103 (LHLSVADLLFVFTLPFWSVDAA). Positions 98 to 101 (WSVD) are chemokine binding. The Extracellular portion of the chain corresponds to 104–114 (IGWYFKEFLCK). The helical transmembrane segment at 115–134 (AVHVIYTVNLYSSVLILAFI) threads the bilayer. Residues 117–121 (HVIYT) form a chemokine binding region. Topologically, residues 135–158 (SLDRYLAIVHATNSQGSRKMLADK) are cytoplasmic. Positions 139–151 (YLAIVHATNSQGS) are involved in dimerization; when bound to chemokine. Residues 159–178 (VVYAGVWLPALLLTVPDLVF) form a helical membrane-spanning segment. At 179-202 (ASVSNENGQFVCDRIYPIDNRETW) the chain is on the extracellular side. The segment at 190–194 (CDRIY) is chemokine binding, important for signaling. The chain crosses the membrane as a helical span at residues 203-223 (TVGFRFLHITVGLILPGLIIL). Residues 224–248 (VCYCVIISKLSHSKGHQKRKALKTT) lie on the Cytoplasmic side of the membrane. A helical transmembrane segment spans residues 249 to 268 (VILILAFFACWLPYYVCLTT). Residues 269–289 (DTFMMLGLVKADCIWENTLHK) lie on the Extracellular side of the membrane. A helical membrane pass occupies residues 290-309 (AISITEALAFFHCCLNPILY). Topologically, residues 310 to 358 (AFLGAKFKKSAQNAFTSVSRGSSLKILSKKRAGLSSVSTESESSSFHSS) are cytoplasmic. The disordered stretch occupies residues 338 to 358 (KKRAGLSSVSTESESSSFHSS). Over residues 344 to 358 (SSVSTESESSSFHSS) the composition is skewed to low complexity.

The protein belongs to the G-protein coupled receptor 1 family. As to quaternary structure, monomer. Can form dimers. Sulfation is required for efficient binding of cxcl12/sdf-1alpha and promotes its dimerization. In terms of processing, O- and N-glycosylated.

The protein localises to the cell membrane. It is found in the cytoplasm. Its subcellular location is the nucleus. The protein resides in the early endosome. It localises to the late endosome. The protein localises to the lysosome. Functionally, receptor for the C-X-C chemokine cxcl12/sdf-1. Transduces a signal by increasing the intracellular level of calcium ions. Signaling with cxcl12/sdf-1 mediates the directional movement of mesodermal cells during gastrulation. May play a role in the migration of embryonic presumptive primordial germ cells (pPGCs). May also be involved in regulating migration of hematopoietic stem cells into the larval liver. The sequence is that of C-X-C chemokine receptor type 4-B (cxcr4-b) from Xenopus laevis (African clawed frog).